The primary structure comprises 181 residues: Adenylate kinase (181 aa).

ATP is bound at residue 10 to 15; the sequence is GAGKGT. Residues 30-59 are NMP; sequence STGDLFRSNISEGTELGLQAKQYLDAGDLV. Residues threonine 31, arginine 36, 57 to 59, 85 to 88, and glutamine 92 each bind AMP; these read DLV and GFPR. The segment at 126–132 is LID; sequence GRGRADD. Arginine 127 lines the ATP pocket. 2 residues coordinate AMP: arginine 129 and arginine 140. An ATP-binding site is contributed by glycine 166.

This sequence belongs to the adenylate kinase family. In terms of assembly, monomer.

The protein localises to the cytoplasm. The catalysed reaction is AMP + ATP = 2 ADP. The protein operates within purine metabolism; AMP biosynthesis via salvage pathway; AMP from ADP: step 1/1. Functionally, catalyzes the reversible transfer of the terminal phosphate group between ATP and AMP. Plays an important role in cellular energy homeostasis and in adenine nucleotide metabolism. This chain is Adenylate kinase, found in Mycobacteroides abscessus (strain ATCC 19977 / DSM 44196 / CCUG 20993 / CIP 104536 / JCM 13569 / NCTC 13031 / TMC 1543 / L948) (Mycobacterium abscessus).